The chain runs to 309 residues: Ribosomal protein L11 methyltransferase (309 aa).

Residues threonine 144, glycine 165, aspartate 187, and asparagine 235 each coordinate S-adenosyl-L-methionine.

The protein belongs to the methyltransferase superfamily. PrmA family.

It is found in the cytoplasm. It carries out the reaction L-lysyl-[protein] + 3 S-adenosyl-L-methionine = N(6),N(6),N(6)-trimethyl-L-lysyl-[protein] + 3 S-adenosyl-L-homocysteine + 3 H(+). In terms of biological role, methylates ribosomal protein L11. The chain is Ribosomal protein L11 methyltransferase from Prochlorococcus marinus (strain MIT 9215).